Reading from the N-terminus, the 364-residue chain is tRNA 2-selenouridine synthase (364 aa).

The region spanning 14–137 (LIADTPIIDV…LRQTAIQATI (124 aa)) is the Rhodanese domain. Cys-97 functions as the S-selanylcysteine intermediate in the catalytic mechanism.

Belongs to the SelU family. As to quaternary structure, monomer.

The enzyme catalyses 5-methylaminomethyl-2-thiouridine(34) in tRNA + selenophosphate + (2E)-geranyl diphosphate + H2O + H(+) = 5-methylaminomethyl-2-selenouridine(34) in tRNA + (2E)-thiogeraniol + phosphate + diphosphate. It carries out the reaction 5-methylaminomethyl-2-thiouridine(34) in tRNA + (2E)-geranyl diphosphate = 5-methylaminomethyl-S-(2E)-geranyl-thiouridine(34) in tRNA + diphosphate. The catalysed reaction is 5-methylaminomethyl-S-(2E)-geranyl-thiouridine(34) in tRNA + selenophosphate + H(+) = 5-methylaminomethyl-2-(Se-phospho)selenouridine(34) in tRNA + (2E)-thiogeraniol. It catalyses the reaction 5-methylaminomethyl-2-(Se-phospho)selenouridine(34) in tRNA + H2O = 5-methylaminomethyl-2-selenouridine(34) in tRNA + phosphate. Its function is as follows. Involved in the post-transcriptional modification of the uridine at the wobble position (U34) of tRNA(Lys), tRNA(Glu) and tRNA(Gln). Catalyzes the conversion of 2-thiouridine (S2U-RNA) to 2-selenouridine (Se2U-RNA). Acts in a two-step process involving geranylation of 2-thiouridine (S2U) to S-geranyl-2-thiouridine (geS2U) and subsequent selenation of the latter derivative to 2-selenouridine (Se2U) in the tRNA chain. The chain is tRNA 2-selenouridine synthase from Escherichia coli O81 (strain ED1a).